Reading from the N-terminus, the 177-residue chain is PLAC8-like protein 1 (177 aa).

It belongs to the cornifelin family.

The protein is PLAC8-like protein 1 (PLAC8L1) of Homo sapiens (Human).